Reading from the N-terminus, the 455-residue chain is MDQSAAVEGVPQKKYLTLRRSVDVSSSYNRLYYLKKHGLSLPPIEPETSFTANIMPPDAYKRNDRIVNLPTKFTHLSSNKVKHVIPAIQWSPEGRRLIVATFSGEFSLWNGSSFTFETIMQAHDTSVTTMKYSHAGDWMISGDADGTIKIWQPNFNMVKELDRIHTEGIRDVAFSNNDSKFVTCSDDNILKIWNFSNGQQERVLSGHHWDVRSCDWHPELGLIVSGSKDNLVKLWDPRSGQCVSTLLKFKHTVLKTRFQPTKGNLLAAISKDKSCRVFDLRASMNELMCVRDEVDFMELEWSTINESMFTVGCYDGSLKHFDLGQDTEKPIHIIPFAHEKCISAIAYNPVGHILATAAKDRTIRFWTRARPVDPNAFDDPTYNNKKMTGWFFGINNDINAVREKSEYGAAPPPASTAFPQQTQYNNNISRVPEIKEPTPTTDKEQRTSILPGLSI.

WD repeat units lie at residues 80–119, 122–162, 164–203, 206–245, 248–288, 291–331, and 337–376; these read KVKH…FETI, AHDT…KELD, IHTE…QERV, GHHW…CVST, KFKH…NELM, RDEV…EKPI, and AHEK…DPNA. 2 disordered regions span residues 406 to 425 and 430 to 455; these read EYGA…TQYN and RVPE…GLSI. Positions 432–446 are enriched in basic and acidic residues; it reads PEIKEPTPTTDKEQR.

It is found in the nucleus. Functionally, required for 3'-end cleavage and polyadenylation of pre-mRNAs. Also involved in chromosome segregation where it has a role in chromosome attachment to the mitotic spindle. The sequence is that of Polyadenylation factor subunit 2 (PFS2) from Candida glabrata (strain ATCC 2001 / BCRC 20586 / JCM 3761 / NBRC 0622 / NRRL Y-65 / CBS 138) (Yeast).